We begin with the raw amino-acid sequence, 475 residues long: Ribulose bisphosphate carboxylase large chain (475 aa).

Positions 1 to 2 (MS) are excised as a propeptide. Pro-3 carries the N-acetylproline modification. Residue Lys-14 is modified to N6,N6,N6-trimethyllysine. Residues Asn-123 and Thr-173 each coordinate substrate. The Proton acceptor role is filled by Lys-175. Lys-177 contacts substrate. 3 residues coordinate Mg(2+): Lys-201, Asp-203, and Glu-204. At Lys-201 the chain carries N6-carboxylysine. The active-site Proton acceptor is His-294. 3 residues coordinate substrate: Arg-295, His-327, and Ser-379.

This sequence belongs to the RuBisCO large chain family. Type I subfamily. Heterohexadecamer of 8 large chains and 8 small chains; disulfide-linked. The disulfide link is formed within the large subunit homodimers. Mg(2+) serves as cofactor. In terms of processing, the disulfide bond which can form in the large chain dimeric partners within the hexadecamer appears to be associated with oxidative stress and protein turnover.

It localises to the plastid. It is found in the chloroplast. It catalyses the reaction 2 (2R)-3-phosphoglycerate + 2 H(+) = D-ribulose 1,5-bisphosphate + CO2 + H2O. The catalysed reaction is D-ribulose 1,5-bisphosphate + O2 = 2-phosphoglycolate + (2R)-3-phosphoglycerate + 2 H(+). RuBisCO catalyzes two reactions: the carboxylation of D-ribulose 1,5-bisphosphate, the primary event in carbon dioxide fixation, as well as the oxidative fragmentation of the pentose substrate in the photorespiration process. Both reactions occur simultaneously and in competition at the same active site. This is Ribulose bisphosphate carboxylase large chain from Spirogyra maxima (Green alga).